A 255-amino-acid polypeptide reads, in one-letter code: tRNA uridine(34) hydroxylase (255 aa).

The Rhodanese domain maps to 131–225; the sequence is AAPDTLVLDT…YLEEVPEAQS (95 aa). The active-site Cysteine persulfide intermediate is the C185.

Belongs to the TrhO family.

The catalysed reaction is uridine(34) in tRNA + AH2 + O2 = 5-hydroxyuridine(34) in tRNA + A + H2O. Catalyzes oxygen-dependent 5-hydroxyuridine (ho5U) modification at position 34 in tRNAs. This Bradyrhizobium diazoefficiens (strain JCM 10833 / BCRC 13528 / IAM 13628 / NBRC 14792 / USDA 110) protein is tRNA uridine(34) hydroxylase.